The sequence spans 267 residues: Methylglyoxal reductase DkgB (267 aa).

Catalysis depends on Tyr-39, which acts as the Proton donor. Residue His-97 coordinates substrate. NADP(+) is bound at residue 179–231 (MTLAYGKALKDEVIARIAVKHNATPVQVILAWAMGEGYSVIPSSTRRENLASN).

This sequence belongs to the aldo/keto reductase family. In terms of assembly, monomer.

The protein localises to the cytoplasm. It catalyses the reaction hydroxyacetone + NADP(+) = methylglyoxal + NADPH + H(+). In terms of biological role, aldo-keto reductase that significantly contributes to cellular methylglyoxal detoxification by catalyzing the NADPH-dependent conversion of methylglyoxal to acetol. The polypeptide is Methylglyoxal reductase DkgB (Salmonella typhi).